Here is a 275-residue protein sequence, read N- to C-terminus: MSIRLYKSYTPGTRNRALSAFSEITTDKPEKSLVKKNHRNKGRNNRGVITIRHRGGGHKKQYRLIDFKRNKYNISAVVNSIEYDPNRNARIALLHFTDGEKRYILHPNNLNVGDTILSGKGISLDIGNSLPLEEIPLGSSVHNIELIPNRGGQIVRSAGTSAKILAKEGNYVTLRLPSKEIRLIRKECFATIGEVSNNDAFLIQSGKAGRTRWLGKRPTVRGSVMNPCDHPHGGGEGRTPIGRTRPLTPWGKPALGKKTRKTKKLSSAYILRRRS.

Residues 219 to 267 form a disordered region; that stretch reads TVRGSVMNPCDHPHGGGEGRTPIGRTRPLTPWGKPALGKKTRKTKKLSS. Basic residues predominate over residues 255-264; that stretch reads LGKKTRKTKK.

The protein belongs to the universal ribosomal protein uL2 family. In terms of assembly, part of the 50S ribosomal subunit.

The protein resides in the plastid. It is found in the chloroplast. This is Large ribosomal subunit protein uL2c (rpl2) from Thalassiosira pseudonana (Marine diatom).